The following is a 56-amino-acid chain: Large ribosomal subunit protein bL32 (56 aa).

Positions 1 to 34 (MAVQQNKPTRSKRGMRRSHDALTTSTVSVDKASG) are disordered.

The protein belongs to the bacterial ribosomal protein bL32 family.

This chain is Large ribosomal subunit protein bL32, found in Sodalis glossinidius (strain morsitans).